The primary structure comprises 99 residues: Protein adenylyltransferase MntA (99 aa).

The GSX(10)DXD motif signature appears at 33 to 47; it reads GSYVRGEAKEDSDVD. Active-site residues include Asp-45 and Asp-47. Positions 45, 47, and 77 each coordinate Mg(2+).

This sequence belongs to the MntA antitoxin family. Mg(2+) serves as cofactor.

The enzyme catalyses L-tyrosyl-[protein] + ATP = O-(5'-adenylyl)-L-tyrosyl-[protein] + diphosphate. It catalyses the reaction O-(5'-adenylyl)-L-tyrosyl-[protein] + ATP = O-[5'-(adenylyl-(5'-&gt;3')-adenylyl)]-L-tyrosyl-[protein] + diphosphate. Antitoxin component of a type VII toxin-antitoxin (TA) system. Overexpression in E.coli neutralizes the toxic effect of cognate toxin HepT. Neutralization is mostly due to AMPylation of the toxin by this enzyme. In Thermococcus cleftensis (strain DSM 27260 / KACC 17922 / CL1), this protein is Protein adenylyltransferase MntA.